Here is a 515-residue protein sequence, read N- to C-terminus: RNA-binding region-containing protein 3 (515 aa).

Residues 1 to 26 (MAVPEPSMPLSRGGPGSASLSPPRGD) form a disordered region. At Ser-21 the chain carries Phosphoserine. An RRM 1 domain is found at 27-102 (RTLLVRHLPA…HTLVVEFAKE (76 aa)). Disordered regions lie at residues 107 to 133 (HSSCPASNAEKKKRLDDTVENDKEKKE), 215 to 254 (LHAPLPPTSPQPPEEPPLPDEDEDLSSKESEYESSDEEDR), and 337 to 369 (ETEQNNEEKNSDSPDTGLDDSNTGFGKLFPKPN). Ser-108 is modified (phosphoserine). The segment covering 115-133 (AEKKKRLDDTVENDKEKKE) has biased composition (basic and acidic residues). Over residues 218-230 (PLPPTSPQPPEEP) the composition is skewed to pro residues. The segment covering 337 to 348 (ETEQNNEEKNSD) has biased composition (basic and acidic residues). Ser-349 carries the phosphoserine modification. Residues 419-502 (CRIYVKNLAR…KPMVVQFARS (84 aa)) form the RRM 2 domain.

In terms of assembly, component of the U11/U12 snRNPs that are part of the U12-type spliceosome. Found in a complex with m(7)G-capped U12 snRNA. Interacts with PDCD7.

It is found in the nucleus. Participates in pre-mRNA U12-dependent splicing, performed by the minor spliceosome which removes U12-type introns. U12-type introns comprises less than 1% of all non-coding sequences. Binds to the 3'-stem-loop of m(7)G-capped U12 snRNA. The chain is RNA-binding region-containing protein 3 (Rnpc3) from Rattus norvegicus (Rat).